A 418-amino-acid chain; its full sequence is Tyrosine--tRNA ligase (418 aa).

Positions 42–51 match the 'HIGH' region motif; that stretch reads PTAPDLHLGH. The short motif at 226–230 is the 'KMSKS' region element; it reads KMSKS. Lysine 229 contributes to the ATP binding site. The 62-residue stretch at 339 to 400 folds into the S4 RNA-binding domain; the sequence is VRLVALLTKS…GKRNFAKVRL (62 aa).

The protein belongs to the class-I aminoacyl-tRNA synthetase family. TyrS type 2 subfamily. As to quaternary structure, homodimer.

It is found in the cytoplasm. It catalyses the reaction tRNA(Tyr) + L-tyrosine + ATP = L-tyrosyl-tRNA(Tyr) + AMP + diphosphate + H(+). Catalyzes the attachment of tyrosine to tRNA(Tyr) in a two-step reaction: tyrosine is first activated by ATP to form Tyr-AMP and then transferred to the acceptor end of tRNA(Tyr). This chain is Tyrosine--tRNA ligase, found in Xylella fastidiosa (strain 9a5c).